The primary structure comprises 279 residues: Tryptophan synthase alpha chain (279 aa).

Residues E50 and D61 each act as proton acceptor in the active site.

The protein belongs to the TrpA family. In terms of assembly, tetramer of two alpha and two beta chains.

The enzyme catalyses (1S,2R)-1-C-(indol-3-yl)glycerol 3-phosphate + L-serine = D-glyceraldehyde 3-phosphate + L-tryptophan + H2O. It functions in the pathway amino-acid biosynthesis; L-tryptophan biosynthesis; L-tryptophan from chorismate: step 5/5. The alpha subunit is responsible for the aldol cleavage of indoleglycerol phosphate to indole and glyceraldehyde 3-phosphate. This chain is Tryptophan synthase alpha chain, found in Brucella ovis (strain ATCC 25840 / 63/290 / NCTC 10512).